The sequence spans 318 residues: Ribonuclease Z (318 aa).

Positions 62, 64, 66, 67, 139, 210, and 268 each coordinate Zn(2+). The active-site Proton acceptor is D66.

The protein belongs to the RNase Z family. As to quaternary structure, homodimer. It depends on Zn(2+) as a cofactor.

The catalysed reaction is Endonucleolytic cleavage of RNA, removing extra 3' nucleotides from tRNA precursor, generating 3' termini of tRNAs. A 3'-hydroxy group is left at the tRNA terminus and a 5'-phosphoryl group is left at the trailer molecule.. Zinc phosphodiesterase, which displays some tRNA 3'-processing endonuclease activity. Probably involved in tRNA maturation, by removing a 3'-trailer from precursor tRNA. The chain is Ribonuclease Z from Microcystis aeruginosa (strain NIES-843 / IAM M-2473).